We begin with the raw amino-acid sequence, 109 residues long: Nucleoid-associated protein BCB4264_A0025 (109 aa).

The protein belongs to the YbaB/EbfC family. In terms of assembly, homodimer.

It is found in the cytoplasm. It localises to the nucleoid. Functionally, binds to DNA and alters its conformation. May be involved in regulation of gene expression, nucleoid organization and DNA protection. This chain is Nucleoid-associated protein BCB4264_A0025, found in Bacillus cereus (strain B4264).